A 332-amino-acid polypeptide reads, in one-letter code: 5-formaminoimidazole-4-carboxamide-1-(beta)-D-ribofuranosyl 5'-monophosphate synthetase (332 aa).

Residues H9 and S72 each coordinate 5-amino-1-(5-phospho-beta-D-ribosyl)imidazole-4-carboxamide. One can recognise an ATP-grasp domain in the interval 93–323; sequence RNLFPWESNQ…IGREINLAIQ (231 aa). ATP contacts are provided by residues 123-183 and E205; that span reads PEDV…IPMY. Position 229 (N229) interacts with 5-amino-1-(5-phospho-beta-D-ribosyl)imidazole-4-carboxamide. Mg(2+) is bound by residues E268 and E281.

It belongs to the phosphohexose mutase family. The cofactor is Mg(2+). It depends on Mn(2+) as a cofactor.

The catalysed reaction is 5-amino-1-(5-phospho-beta-D-ribosyl)imidazole-4-carboxamide + formate + ATP = 5-formamido-1-(5-phospho-D-ribosyl)imidazole-4-carboxamide + ADP + phosphate. Its pathway is purine metabolism; IMP biosynthesis via de novo pathway; 5-formamido-1-(5-phospho-D-ribosyl)imidazole-4-carboxamide from 5-amino-1-(5-phospho-D-ribosyl)imidazole-4-carboxamide (formate route): step 1/1. In terms of biological role, catalyzes the ATP- and formate-dependent formylation of 5-aminoimidazole-4-carboxamide-1-beta-d-ribofuranosyl 5'-monophosphate (AICAR) to 5-formaminoimidazole-4-carboxamide-1-beta-d-ribofuranosyl 5'-monophosphate (FAICAR) in the absence of folates. In Metallosphaera sedula (strain ATCC 51363 / DSM 5348 / JCM 9185 / NBRC 15509 / TH2), this protein is 5-formaminoimidazole-4-carboxamide-1-(beta)-D-ribofuranosyl 5'-monophosphate synthetase.